The following is a 335-amino-acid chain: Ferredoxin--NADP reductase (335 aa).

The FAD site is built by D35, Q43, Y48, A88, F122, D287, and S328.

It belongs to the ferredoxin--NADP reductase type 2 family. In terms of assembly, homodimer. Requires FAD as cofactor.

The enzyme catalyses 2 reduced [2Fe-2S]-[ferredoxin] + NADP(+) + H(+) = 2 oxidized [2Fe-2S]-[ferredoxin] + NADPH. The protein is Ferredoxin--NADP reductase of Thermus thermophilus (strain ATCC BAA-163 / DSM 7039 / HB27).